Reading from the N-terminus, the 430-residue chain is UDP-N-acetylglucosamine 1-carboxyvinyltransferase (430 aa).

22–23 is a phosphoenolpyruvate binding site; sequence KN. Arg-102 contributes to the UDP-N-acetyl-alpha-D-glucosamine binding site. The active-site Proton donor is Cys-126. Cys-126 bears the 2-(S-cysteinyl)pyruvic acid O-phosphothioketal mark. UDP-N-acetyl-alpha-D-glucosamine contacts are provided by residues 131 to 135, 172 to 175, Asp-317, and Ile-339; these read RPVDL and KVSV.

This sequence belongs to the EPSP synthase family. MurA subfamily.

The protein localises to the cytoplasm. The catalysed reaction is phosphoenolpyruvate + UDP-N-acetyl-alpha-D-glucosamine = UDP-N-acetyl-3-O-(1-carboxyvinyl)-alpha-D-glucosamine + phosphate. The protein operates within cell wall biogenesis; peptidoglycan biosynthesis. Its function is as follows. Cell wall formation. Adds enolpyruvyl to UDP-N-acetylglucosamine. The chain is UDP-N-acetylglucosamine 1-carboxyvinyltransferase from Rhizobium meliloti (strain 1021) (Ensifer meliloti).